Here is a 187-residue protein sequence, read N- to C-terminus: Glutathione-dependent formaldehyde-activating enzyme (187 aa).

In terms of domain architecture, CENP-V/GFA spans 20–167 (FAGGTLVCKC…LKELGLEPYD (148 aa)). The Zn(2+) site is built by cysteine 27, cysteine 29, cysteine 48, cysteine 50, cysteine 53, cysteine 95, and cysteine 98.

Belongs to the Gfa family. The cofactor is Zn(2+).

It catalyses the reaction S-(hydroxymethyl)glutathione = glutathione + formaldehyde. Its pathway is one-carbon metabolism; formaldehyde degradation; formate from formaldehyde (glutathione route): step 1/3. Its function is as follows. Catalyzes the condensation of formaldehyde and glutathione to S-hydroxymethylglutathione. The protein is Glutathione-dependent formaldehyde-activating enzyme of Bradyrhizobium sp. (strain BTAi1 / ATCC BAA-1182).